The primary structure comprises 871 residues: Alanine--tRNA ligase (871 aa).

The Zn(2+) site is built by H590, H594, C694, and H698.

This sequence belongs to the class-II aminoacyl-tRNA synthetase family. The cofactor is Zn(2+).

It is found in the cytoplasm. It carries out the reaction tRNA(Ala) + L-alanine + ATP = L-alanyl-tRNA(Ala) + AMP + diphosphate. Its function is as follows. Catalyzes the attachment of alanine to tRNA(Ala) in a two-step reaction: alanine is first activated by ATP to form Ala-AMP and then transferred to the acceptor end of tRNA(Ala). Also edits incorrectly charged Ser-tRNA(Ala) and Gly-tRNA(Ala) via its editing domain. This is Alanine--tRNA ligase from Thermoplasma acidophilum (strain ATCC 25905 / DSM 1728 / JCM 9062 / NBRC 15155 / AMRC-C165).